Here is a 265-residue protein sequence, read N- to C-terminus: Protein Rv2993c (265 aa).

3 residues coordinate a divalent metal cation: Glu-114, Glu-116, and Asp-145.

It in the C-terminal section; belongs to the FAH family. The cofactor is a divalent metal cation.

This chain is Protein Rv2993c, found in Mycobacterium tuberculosis (strain ATCC 25618 / H37Rv).